Here is a 405-residue protein sequence, read N- to C-terminus: MAASGKTSKSASNHVIFKKISRDKSVTIYLGKRDYIDHVEQVEPVDGIVLVDPELVKGKKVYVSLTCAFRYGQEDIDVIGLSFRRDLYFSQVQVFPPVEAAGAPTKLQESLMKKLGGNTYPFLLTFPDYLPCSVMLQPAPQDMGKCCGVDFEVKAFARDSTEDEEDKVPKKSSVRLLIRKVQHAPSKMGPQPRAEAAWQFFMSDKPLHLAVSLSKEIYFHGEPITVTVTVTNNTEKTVKKIKALVEQVANVVLYSSDYYTKPVAQEETQEKVPPNSTLTTTLTLVPLLANNRERRGIALDGKIKHEDTNLASSTIIKEGIDRTVLGILVSYHIKVKLTVSGFLGELTSSEVATEVPFRLMHPQPEDPATAKESFQDANLVFEEFARQNLKDFAEEGKKDREAMDE.

T234 bears the Phosphothreonine mark.

It belongs to the arrestin family. In terms of assembly, monomer. Homodimer. Homotetramer. Interacts with RHO (via the phosphorylated C-terminus).

The protein resides in the cell projection. It localises to the cilium. Its subcellular location is the photoreceptor outer segment. The protein localises to the membrane. In terms of biological role, binds to photoactivated, phosphorylated RHO and terminates RHO signaling via G-proteins by competing with G-proteins for the same binding site on RHO. May play a role in preventing light-dependent degeneration of retinal photoreceptor cells. The polypeptide is S-arrestin (SAG) (Canis lupus familiaris (Dog)).